A 1755-amino-acid chain; its full sequence is Deleted in lung and esophageal cancer protein 1 (1755 aa).

Basic residues predominate over residues 1–12; it reads METRSSKTRRSL. Disordered stretches follow at residues 1–39, 1339–1360, and 1529–1553; these read METRSSKTRRSLASRTNECQGTMWAPTSPPAGSSSPSQP, PGPSSSSEFSHETDSSVEGSSS, and SQDGASQDHRAPGPGQKQECEEETA. Positions 30–39 are enriched in low complexity; it reads PAGSSSPSQP.

Interacts with alpha- and beta-tubulin. Interacts with BBS2, BBS4, BBS5, MKKS, TCP1, CCT2, CCT3, CCT4, CCT5 and CCT7. In terms of tissue distribution, expressed in all tissues examined. Expression is highest in prostate and testis.

The protein resides in the cytoplasm. Its function is as follows. Essential for spermatogenesis and male fertility. May play an important role in sperm head and tail formation. May act as a tumor suppressor by inhibiting cell proliferation. This is Deleted in lung and esophageal cancer protein 1 from Homo sapiens (Human).